The sequence spans 206 residues: Dual specificity phosphatase 29 (206 aa).

In terms of domain architecture, Tyrosine-protein phosphatase spans 47–194 (HVNQVWPSVY…LRALDITLQE (148 aa)). A substrate-binding site is contributed by 138–145 (HCVMGRSR). Cys139 serves as the catalytic Phosphocysteine intermediate.

It belongs to the protein-tyrosine phosphatase family. Non-receptor class dual specificity subfamily.

Its subcellular location is the cytoplasm. It localises to the nucleus. It catalyses the reaction O-phospho-L-tyrosyl-[protein] + H2O = L-tyrosyl-[protein] + phosphate. The enzyme catalyses O-phospho-L-seryl-[protein] + H2O = L-seryl-[protein] + phosphate. It carries out the reaction O-phospho-L-threonyl-[protein] + H2O = L-threonyl-[protein] + phosphate. Functionally, dual specificity phosphatase able to dephosphorylate phosphotyrosine, phosphoserine and phosphothreonine residues within the same substrate, with a preference for phosphotyrosine as a substrate. Involved in the modulation of AMPK and MAPK1/2 signaling pathways. The sequence is that of Dual specificity phosphatase 29 (dusp29) from Gasterosteus aculeatus (Three-spined stickleback).